We begin with the raw amino-acid sequence, 183 residues long: Ribose 1,5-bisphosphate phosphokinase PhnN (183 aa).

Residue 6-13 (GPSGAGKD) coordinates ATP.

The protein belongs to the ribose 1,5-bisphosphokinase family.

It carries out the reaction alpha-D-ribose 1,5-bisphosphate + ATP = 5-phospho-alpha-D-ribose 1-diphosphate + ADP. Its pathway is metabolic intermediate biosynthesis; 5-phospho-alpha-D-ribose 1-diphosphate biosynthesis; 5-phospho-alpha-D-ribose 1-diphosphate from D-ribose 5-phosphate (route II): step 3/3. In terms of biological role, catalyzes the phosphorylation of ribose 1,5-bisphosphate to 5-phospho-D-ribosyl alpha-1-diphosphate (PRPP). This Agrobacterium fabrum (strain C58 / ATCC 33970) (Agrobacterium tumefaciens (strain C58)) protein is Ribose 1,5-bisphosphate phosphokinase PhnN.